Consider the following 355-residue polypeptide: MTKNIAQAAVKFEQWQPKIEQESYLTINSLECHTGGEPLRIITSGFPVLKGNTILAKANDCKQNYDQLRRALMFEPRGHADMYGAIITDAERDDSHFGAVFIHNEGYSSMCGHAVIALTKTAVESGVVARTGDVTQVVIDVPCGQIYAMAYSHNNVVKHVSFQCVPSFVYAKDQQVEVDGIGMVQFDIAYGGAFYAYVQASSLGLSLVPEQQEKLIAYGRKIKQAIIPQFEINHPTTAELSFLYGVIFIDDSPNQDVHSRNVCIFADGELDRSPTGSGVSGRIALHHAKQQIVLNETITIESILASSFSVRAIETVCFAGFDAVIPEVTGDAYVCGKGQWFINAEDPLKYGFLLR.

Cys-111 acts as the Proton acceptor in catalysis. Substrate-binding positions include 112–113 (GH) and 276–277 (GS).

Belongs to the proline racemase family. Homodimer.

It carries out the reaction trans-3-hydroxy-L-proline = 1-pyrroline-2-carboxylate + H2O. Catalyzes the dehydration of trans-3-hydroxy-L-proline (t3LHyp) to Delta(1)-pyrroline-2-carboxylate (Pyr2C). Together with LhpI, is involved in a metabolic pathway that converts t3LHyp to L-proline. The sequence is that of Trans-3-hydroxy-L-proline dehydratase from Colwellia psychrerythraea (strain 34H / ATCC BAA-681) (Vibrio psychroerythus).